A 542-amino-acid polypeptide reads, in one-letter code: Peptide chain release factor 3 (542 aa).

A tr-type G domain is found at D14–G283. GTP-binding positions include S23–T30, D91–H95, and N145–D148.

The protein belongs to the TRAFAC class translation factor GTPase superfamily. Classic translation factor GTPase family. PrfC subfamily.

The protein resides in the cytoplasm. Functionally, increases the formation of ribosomal termination complexes and stimulates activities of RF-1 and RF-2. It binds guanine nucleotides and has strong preference for UGA stop codons. It may interact directly with the ribosome. The stimulation of RF-1 and RF-2 is significantly reduced by GTP and GDP, but not by GMP. This is Peptide chain release factor 3 from Trichodesmium erythraeum (strain IMS101).